The primary structure comprises 148 residues: Transcriptional regulator MraZ (148 aa).

2 SpoVT-AbrB domains span residues 7-56 (KERH…EPDI) and 85-128 (LDVV…APER).

This sequence belongs to the MraZ family. In terms of assembly, forms oligomers.

The protein resides in the cytoplasm. It localises to the nucleoid. The chain is Transcriptional regulator MraZ from Chlorobium phaeobacteroides (strain DSM 266 / SMG 266 / 2430).